Consider the following 144-residue polypeptide: L-fucose mutarotase (144 aa).

H22 (proton donor) is an active-site residue. Substrate contacts are provided by residues D30, R109, and 131–133 (YGN).

Belongs to the RbsD / FucU family. FucU mutarotase subfamily. Homodecamer.

Its subcellular location is the cytoplasm. The enzyme catalyses alpha-L-fucose = beta-L-fucose. Its pathway is carbohydrate metabolism; L-fucose metabolism. Involved in the anomeric conversion of L-fucose. The chain is L-fucose mutarotase from Haemophilus influenzae (strain PittGG).